The following is a 269-amino-acid chain: Hydroxyethylthiazole kinase (269 aa).

Residue Met-46 participates in substrate binding. The ATP site is built by Arg-122 and Thr-168. Gly-195 is a substrate binding site.

This sequence belongs to the Thz kinase family. Mg(2+) serves as cofactor.

It catalyses the reaction 5-(2-hydroxyethyl)-4-methylthiazole + ATP = 4-methyl-5-(2-phosphooxyethyl)-thiazole + ADP + H(+). The protein operates within cofactor biosynthesis; thiamine diphosphate biosynthesis; 4-methyl-5-(2-phosphoethyl)-thiazole from 5-(2-hydroxyethyl)-4-methylthiazole: step 1/1. Its function is as follows. Catalyzes the phosphorylation of the hydroxyl group of 4-methyl-5-beta-hydroxyethylthiazole (THZ). The polypeptide is Hydroxyethylthiazole kinase (Chloroflexus aurantiacus (strain ATCC 29366 / DSM 635 / J-10-fl)).